Reading from the N-terminus, the 1024-residue chain is Carbamoyl phosphate synthase large chain (1024 aa).

A carboxyphosphate synthetic domain region spans residues 1–402 (MPKRTDLQTI…SLQKALRSTE (402 aa)). ATP is bound by residues R129, R169, G175, G176, E208, I210, E215, G241, V242, H243, Q285, and E299. The region spanning 133–328 (QAAMKKIGVE…IAKIAALLAV (196 aa)) is the ATP-grasp 1 domain. Q285, E299, and N301 together coordinate Mg(2+). Positions 285, 299, and 301 each coordinate Mn(2+). The tract at residues 403-546 (GDIRGVYAEM…YSTYEWEDEV (144 aa)) is oligomerization domain. Residues 547 to 929 (APTDKPKVVI…AFYRAQLGAK (383 aa)) form a carbamoyl phosphate synthetic domain region. Residues 671–863 (NALCERLGLP…LAKSAARIAA (193 aa)) form the ATP-grasp 2 domain. Positions 707, 747, 749, 754, 779, 780, 781, 782, 822, and 834 each coordinate ATP. Positions 822, 834, and 836 each coordinate Mg(2+). Positions 822, 834, and 836 each coordinate Mn(2+). The 95-residue stretch at 930–1024 (NYLPLEGTAL…GVRSLQEWVK (95 aa)) folds into the MGS-like domain. Positions 930–1024 (NYLPLEGTAL…GVRSLQEWVK (95 aa)) are allosteric domain.

This sequence belongs to the CarB family. Composed of two chains; the small (or glutamine) chain promotes the hydrolysis of glutamine to ammonia, which is used by the large (or ammonia) chain to synthesize carbamoyl phosphate. Tetramer of heterodimers (alpha,beta)4. It depends on Mg(2+) as a cofactor. Requires Mn(2+) as cofactor.

The catalysed reaction is hydrogencarbonate + L-glutamine + 2 ATP + H2O = carbamoyl phosphate + L-glutamate + 2 ADP + phosphate + 2 H(+). It carries out the reaction hydrogencarbonate + NH4(+) + 2 ATP = carbamoyl phosphate + 2 ADP + phosphate + 2 H(+). It participates in amino-acid biosynthesis; L-arginine biosynthesis; carbamoyl phosphate from bicarbonate: step 1/1. It functions in the pathway pyrimidine metabolism; UMP biosynthesis via de novo pathway; (S)-dihydroorotate from bicarbonate: step 1/3. Functionally, large subunit of the glutamine-dependent carbamoyl phosphate synthetase (CPSase). CPSase catalyzes the formation of carbamoyl phosphate from the ammonia moiety of glutamine, carbonate, and phosphate donated by ATP, constituting the first step of 2 biosynthetic pathways, one leading to arginine and/or urea and the other to pyrimidine nucleotides. The large subunit (synthetase) binds the substrates ammonia (free or transferred from glutamine from the small subunit), hydrogencarbonate and ATP and carries out an ATP-coupled ligase reaction, activating hydrogencarbonate by forming carboxy phosphate which reacts with ammonia to form carbamoyl phosphate. This is Carbamoyl phosphate synthase large chain from Deinococcus radiodurans (strain ATCC 13939 / DSM 20539 / JCM 16871 / CCUG 27074 / LMG 4051 / NBRC 15346 / NCIMB 9279 / VKM B-1422 / R1).